A 198-amino-acid polypeptide reads, in one-letter code: Translation machinery-associated protein 22 (198 aa).

The 72-residue stretch at 99–170 folds into the SUI1 domain; it reads VIIKREARTK…EVETYIHSLL (72 aa).

Belongs to the DENR family. Interacts with the 40S ribosomal subunit.

It is found in the cytoplasm. The polypeptide is Translation machinery-associated protein 22 (TMA22) (Saccharomyces cerevisiae (strain YJM789) (Baker's yeast)).